Here is a 91-residue protein sequence, read N- to C-terminus: uncharacterized protein (91 aa).

This is an uncharacterized protein from Homo sapiens (Human).